The sequence spans 353 residues: Protein RecA (353 aa).

Residue 67–74 participates in ATP binding; that stretch reads GPESSGKT.

This sequence belongs to the RecA family.

It is found in the cytoplasm. Can catalyze the hydrolysis of ATP in the presence of single-stranded DNA, the ATP-dependent uptake of single-stranded DNA by duplex DNA, and the ATP-dependent hybridization of homologous single-stranded DNAs. It interacts with LexA causing its activation and leading to its autocatalytic cleavage. In Shewanella woodyi (strain ATCC 51908 / MS32), this protein is Protein RecA.